The sequence spans 547 residues: uncharacterized protein (547 aa).

Residues 1–37 (MSAASSAIPKRSDPRLLDQKKSAKSTLPKNTPENGVS) form a disordered region. Residues 10 to 21 (KRSDPRLLDQKK) are compositionally biased toward basic and acidic residues. Positions 24–37 (KSTLPKNTPENGVS) are enriched in polar residues. C3H1-type zinc fingers lie at residues 41 to 67 (NLQHVPCKFFRNGTCTAGENCPFSHSL) and 68 to 95 (ETERPICKYFLKGNCKFGPKCALSHALP). The segment at 132–176 (SPSLSSKTMKNPADKANNTTATDVRGNTATSPYFPFSRSPGRHSG) is disordered. Over residues 147–162 (ANNTTATDVRGNTATS) the composition is skewed to polar residues. Position 343 is a phosphoserine (Ser-343). Tyr-344 carries the phosphotyrosine modification. Phosphoserine occurs at positions 353, 355, 483, 489, 495, and 499. Thr-502 is modified (phosphothreonine). Residues 526–536 (VANSSPPWNST) are compositionally biased toward polar residues. Residues 526–547 (VANSSPPWNSTVEEETPFQMDD) form a disordered region. Residues 537-547 (VEEETPFQMDD) are compositionally biased toward acidic residues.

This is an uncharacterized protein from Schizosaccharomyces pombe (strain 972 / ATCC 24843) (Fission yeast).